We begin with the raw amino-acid sequence, 457 residues long: MNQQLSWRTIVGYSLGDVANNFAFAMGALFLLSYYTDVAGVGAAAAGTMLLLVRVFDAFADVFAGRVVDSVNTRWGKFRPFLLFGTAPLMIFSVLVFWVLTDWSHGSKVVYAYLTYMGLGLCYSLVNIPYGSLATAMTQQPQSRARLGAARGIAASLTFVCLAFLIGPSIKNSSPEEMVSVYHFWTIVLAIAGMVLYFICFKSTRENVVRIVAQPSLNISLQTLKRNRPLFMLCIGALCVLISTFAVSASSLFYVRYVLNDTGLFTVLVLVQNLVGTVASAPLVPGMVARIGKKNTFLIGALLGTCGYLLFFWVSVWSLPVALVALAIASIGQGVTMTVMWALEADTVEYGEYLTGVRIEGLTYSLFSFTRKCGQAIGGSIPAFILGLSGYIANQVQTPEVIMGIRTSIALVPCGFMLLAFVIIWFYPLTDKKFKEIVVEIDNRKKVQQQLISDITN.

The Cytoplasmic segment spans residues M1–V11. The chain crosses the membrane as a helical span at residues G12 to Y34. Topologically, residues Y35 to D37 are periplasmic. Residues V38–A60 traverse the membrane as a helical segment. Residues D61–R79 are Cytoplasmic-facing. The chain crosses the membrane as a helical span at residues P80–L100. Residues T101 to K108 lie on the Periplasmic side of the membrane. The chain crosses the membrane as a helical span at residues V109–P129. Residues Y130 to R146 lie on the Cytoplasmic side of the membrane. A helical transmembrane segment spans residues L147 to G167. At P168 to S180 the chain is on the periplasmic side. Residues V181–F201 traverse the membrane as a helical segment. Residues K202–R228 lie on the Cytoplasmic side of the membrane. A helical membrane pass occupies residues P229 to A249. Topologically, residues S250–G263 are periplasmic. The chain crosses the membrane as a helical span at residues L264 to V284. Residues P285 to T296 are Cytoplasmic-facing. The helical transmembrane segment at F297–V316 threads the bilayer. At W317–P320 the chain is on the periplasmic side. The chain crosses the membrane as a helical span at residues V321 to L343. Topologically, residues E344–K372 are cytoplasmic. The chain crosses the membrane as a helical span at residues C373–A393. Over N394 to S408 the chain is Periplasmic. Residues I409–L429 traverse the membrane as a helical segment. The Cytoplasmic portion of the chain corresponds to T430 to N457.

This sequence belongs to the sodium:galactoside symporter (TC 2.A.2) family.

It is found in the cell inner membrane. In Escherichia coli (strain K12), this protein is Glucuronide carrier protein homolog (uidB).